A 277-amino-acid chain; its full sequence is Inositol monophosphatase 1 (277 aa).

Residues E70, D90, I92, and D93 each coordinate Mg(2+). Substrate-binding positions include E70, 90-95 (DPIDGT), 194-196 (GTA), E213, and D220. Residue D220 participates in Mg(2+) binding.

It belongs to the inositol monophosphatase superfamily. As to quaternary structure, homodimer. Mg(2+) serves as cofactor. As to expression, mostly expressed in brain, small intestine, testis, kidney, and spleen (at protein level).

It is found in the cytoplasm. The enzyme catalyses a myo-inositol phosphate + H2O = myo-inositol + phosphate. It carries out the reaction 1D-myo-inositol 1-phosphate + H2O = myo-inositol + phosphate. It catalyses the reaction 1D-myo-inositol 2-phosphate + H2O = myo-inositol + phosphate. The catalysed reaction is 1D-myo-inositol 3-phosphate + H2O = myo-inositol + phosphate. The enzyme catalyses 1D-myo-inositol 4-phosphate + H2O = myo-inositol + phosphate. It carries out the reaction 1D-myo-inositol 5-phosphate + H2O = myo-inositol + phosphate. It catalyses the reaction 1D-myo-inositol 6-phosphate + H2O = myo-inositol + phosphate. The catalysed reaction is scyllo-inositol 1-phosphate + H2O = scyllo-inositol + phosphate. The enzyme catalyses alpha-D-galactose 1-phosphate + H2O = D-galactose + phosphate. It carries out the reaction alpha-D-glucose 1-phosphate + H2O = D-glucose + phosphate. It catalyses the reaction D-glucose 6-phosphate + H2O = D-glucose + phosphate. The catalysed reaction is beta-D-fructose 1-phosphate + H2O = D-fructose + phosphate. The enzyme catalyses glycerol 2-phosphate + H2O = glycerol + phosphate. It carries out the reaction adenosine 2'-phosphate + H2O = adenosine + phosphate. It functions in the pathway polyol metabolism; myo-inositol biosynthesis; myo-inositol from D-glucose 6-phosphate: step 2/2. Inhibited by Li(+), Ca(2+) and Mn(2+), but also by Mg(2+) at concentrations above 3 mM. Its function is as follows. Phosphatase involved in the dephosphorylation of myo-inositol monophosphate to generate myo-inositol. Is also able to dephosphorylate scyllo-inositol-phosphate, myo-inositol 1,4-diphosphate, scyllo-inositol-1,3-diphosphate and scyllo-inositol-1,4-diphosphate. Also dephosphorylates in vitro other sugar-phosphates including D-galactose-1-phosphate, glucose-1-phosphate, glucose-6-phosphate, fructose-1-phosphate, beta-glycerophosphate and 2'-AMP. Responsible for the provision of inositol required for synthesis of phosphatidylinositol and polyphosphoinositides, and involved in maintaining normal brain function. Has been implicated as the pharmacological target for lithium Li(+) action in brain. The protein is Inositol monophosphatase 1 (Impa1) of Mus musculus (Mouse).